A 100-amino-acid chain; its full sequence is Large ribosomal subunit protein uL23 (100 aa).

Belongs to the universal ribosomal protein uL23 family. In terms of assembly, part of the 50S ribosomal subunit. Contacts protein L29, and trigger factor when it is bound to the ribosome.

In terms of biological role, one of the early assembly proteins it binds 23S rRNA. One of the proteins that surrounds the polypeptide exit tunnel on the outside of the ribosome. Forms the main docking site for trigger factor binding to the ribosome. The protein is Large ribosomal subunit protein uL23 of Rippkaea orientalis (strain PCC 8801 / RF-1) (Cyanothece sp. (strain PCC 8801)).